Here is a 199-residue protein sequence, read N- to C-terminus: Pre T-cell antigen receptor alpha (199 aa).

The first 16 residues, Met1–Ala16, serve as a signal peptide directing secretion. The Extracellular segment spans residues Leu17–Arg155. Cysteines 47 and 107 form a disulfide. N-linked (GlcNAc...) asparagine glycosylation is found at Asn67 and Asn117. The segment at Asn117–Glu139 is disordered. Residues Leu156 to Leu176 form a helical membrane-spanning segment. The Cytoplasmic segment spans residues Ala177 to Thr199.

In terms of assembly, heterodimer with TCRB; disulfide linked. This heterodimer assembles with CD3 proteins into a signaling-competent pre-T-cell receptor complex. Interacts with RHBDD1. Found in CD45+ but not in the CD45- fetal liver cells.

Its subcellular location is the membrane. The protein localises to the cell membrane. Functionally, component of the pre-T-cell receptor complex (composed of PTCRA, TCRB and the CD3 complex) that has a crucial role in early T-cell development, particularly alpha-beta T cell differentiation. The chain is Pre T-cell antigen receptor alpha from Rattus norvegicus (Rat).